We begin with the raw amino-acid sequence, 1202 residues long: DNA polymerase beta (1202 aa).

3 consecutive repeat copies span residues 1071–1074 (AGNP), 1075–1078 (AGNP), and 1079–1082 (AGNA). A 3 X 4 AA tandem repeats of A-G-[NK]-[PA] region spans residues 1071–1082 (AGNPAGNPAGNA).

Belongs to the DNA polymerase type-B family.

The enzyme catalyses DNA(n) + a 2'-deoxyribonucleoside 5'-triphosphate = DNA(n+1) + diphosphate. In terms of biological role, DNA-directed DNA polymerase involved in viral DNA replication. The protein is DNA polymerase beta (DPOL) of Ornithodoros (relapsing fever ticks).